The following is a 243-amino-acid chain: MTDNLQDLISTKLAAAIANPLFPAVDSQLRAGRHISLDQLDNHAFLMDFQGELDSFYRRYNVELIRAPEGFFYLRPKATTLIARSVLTELEMLVGKVLCYLYLSPERLAQQGIFSTQEVYDELLNLADENKLLKAVNQRSSGSDLDKQKLAEKVRAALNRLRRLGMIHGVGEQNSGKFTIAEAVFRFGAEVRAGDDPREAQLRLIRDGEAATPDSLALEKQADLNEVDDNDELEDELDDEEHA.

The interval 214–243 is disordered; that stretch reads DSLALEKQADLNEVDDNDELEDELDDEEHA. A compositionally biased stretch (acidic residues) spans 225 to 243; the sequence is NEVDDNDELEDELDDEEHA.

This sequence belongs to the MukE family. Interacts, and probably forms a ternary complex, with MukF and MukB. The complex formation is stimulated by calcium or magnesium.

The protein localises to the cytoplasm. It is found in the nucleoid. In terms of biological role, involved in chromosome condensation, segregation and cell cycle progression. May participate in facilitating chromosome segregation by condensation DNA from both sides of a centrally located replisome during cell division. Probably acts via its interaction with MukB and MukF. This chain is Chromosome partition protein MukE, found in Pasteurella multocida (strain Pm70).